Consider the following 116-residue polypeptide: Ly-6/neurotoxin-like protein 1 (116 aa).

An N-terminal signal peptide occupies residues 1 to 20; it reads MTHLLTVFLVALMGLPVAQA. Positions 21–104 constitute a UPAR/Ly6 domain; sequence LECHVCAYNG…GFATPVTLAL (84 aa). Cystine bridges form between C23–C46, C26–C33, C39–C64, C68–C85, and C86–C91. A lipid anchor (GPI-anchor amidated asparagine) is attached at N92. Residues 93 to 116 constitute a propeptide, removed in mature form; sequence GAGFATPVTLALVPALLATFWSLL.

In terms of assembly, interacts with nAChRs containing alpha-4:beta-2 (CHRNA4:CHRNB2) and alpha-7 (CHRNA7) subunits. Interacts with CHRNA4 probably in the endoplasmic reticulum prior to nAChR pentameric assembly. Interacts with KCNA2/Potassium voltage-gated channel subfamily A member 2. In terms of tissue distribution, expressed in neurons of multiple regions in the CNS, including the cerebral cortex, thalamus, substantia nigra, cerebellum, amygdala and hippocampus. Also expressed in kidney, heart and thymus, but at lower levels than in the brain. Expressed in the primary visual cortex (V1) and the lateral geniculate nucleus (at protein level).

It localises to the cell membrane. The protein resides in the cell projection. The protein localises to the dendrite. It is found in the endoplasmic reticulum. Acts in different tissues through interaction to nicotinic acetylcholine receptors (nAChRs). The proposed role as modulator of nAChR activity seems to be dependent on the nAChR subtype and stoichiometry, and to involve an effect on nAChR trafficking and its cell surface expression, and on single channel properties of the nAChR inserted in the plasma membrane. Modulates functional properties of nicotinic acetylcholine receptors (nAChRs) to prevent excessive excitation, and hence neurodegeneration. Enhances desensitization by increasing both the rate and extent of desensitization of alpha-4:beta-2-containing nAChRs and slowing recovery from desensitization. Promotes large amplitude ACh-evoked currents through alpha-4:beta-2 nAChRs. Is involved in regulation of the nAChR pentameric assembly in the endoplasmic reticulum. Shifts stoichiometry from high sensitivity alpha-4(2):beta-2(3) to low sensitivity alpha-4(3):beta-2(2) nAChR. In vitro modulates alpha-3:beta-4-containing nAChRs. Reduces cell surface expression of (alpha-3:beta-4)(2):beta-4 and (alpha-3:beta-4)(2):alpha-5 nAChRs suggesting an interaction with nAChR alpha-3(-):(+)beta-4 subunit interfaces and an allosteric mode. Corresponding single channel effects characterized by decreased unitary conductance, altered burst proportions and enhanced desensitization/inactivation seem to depend on nAChR alpha:alpha subunit interfaces and are greater in (alpha-3:beta-2)(2):alpha-3 when compared to (alpha-3:beta-2)(2):alpha-5 nAChRs. Prevents plasticity in the primary visual cortex late in life. The polypeptide is Ly-6/neurotoxin-like protein 1 (Mus musculus (Mouse)).